A 42-amino-acid polypeptide reads, in one-letter code: GTTCYCGKTIGIYWFGTKTCPSNRGYTGSCGYFLGICCYPVD.

3 disulfide bridges follow: C4-C37, C6-C30, and C20-C38.

It belongs to the sea anemone type 3 (BDS) potassium channel toxin family.

The protein localises to the secreted. The protein resides in the nematocyst. Its function is as follows. Peptide with both antimicrobial and neurotoxin activities. This toxin acts both on ERG potassium channels and sodium channels. It potently and reversibly inhibits human Kv11.1/KCNH2/ERG1 (IC(50)=34 nM), rat Kv11.1/KCNH2/ERG1 and Kv11.3/KCNH7/ERG3 voltage-gated potassium channels in a similar potency. It acts as a gating-modifier toxin that shifts the voltage-dependence of ERG activation in the positive direction and suppresses its current amplitudes elicited by strong depolarizing pulses. On sodium channels, it blocks Nav1.2/SCN2A (EC(50)=31 nM), Nav1.3/SCN3A, Nav1.4/SCN4A, Nav1.5/SCN5A, Nav1.6/SCN8A, Nav1.8/SCN10A (EC(50)=92 nM). It may act by binding at site 1 or close by, only when the pore is in an open configuration. Shows antibacterial activity against the Gram-negative bacterium S.typhimurium, but not on the bacteria B.subtilis, S.aureus, and P.aeruginosa. In vivo, this toxin does not induce neurotoxic symptoms when injected into mice. This chain is Kappa-actitoxin-Ael2a, found in Anthopleura elegantissima (Green aggregating anemone).